The sequence spans 90 residues: Putative F-box protein At5g16285 (90 aa).

In terms of domain architecture, F-box spans 1–46 (MRIESLLQHDVVERILERLAVNSLPRFKAVSKQWKSTIESQFFQGK).

The chain is Putative F-box protein At5g16285 from Arabidopsis thaliana (Mouse-ear cress).